A 1091-amino-acid polypeptide reads, in one-letter code: ATP-dependent helicase/deoxyribonuclease subunit B (1091 aa).

It belongs to the helicase family. AddB/RexB type 2 subfamily. In terms of assembly, heterodimer of AddA and RexB. Requires Mg(2+) as cofactor.

The heterodimer acts as both an ATP-dependent DNA helicase and an ATP-dependent, dual-direction single-stranded exonuclease. Recognizes the chi site generating a DNA molecule suitable for the initiation of homologous recombination. This subunit has 5' -&gt; 3' nuclease activity but not helicase activity. This is ATP-dependent helicase/deoxyribonuclease subunit B from Streptococcus pneumoniae serotype 19F (strain G54).